Here is a 405-residue protein sequence, read N- to C-terminus: MVLAAPLLLGFLLLALELRPRGEAAEGPAAAAAAAAAAAGVGGERSSRPAPSAPPEPDGCPVCVWRQHSRELRLESIKSQILSKLRLKEAPNISREVVKQLLPKAPPLQQILDLHDFQGDALQPEDFLEEDEYHATTETVISMAQETDPAVQTDGSPLCCHFHFSPKVMFTKVLKAQLWVYLRPVPRPATVYLQILRLKPLTGEGTAGGGGGGRRHIRIRSLKIELHSRSGHWQSIDFKQVLHSWFRQPQSNWGIEINAFDPSGTDLAVTSLGPGAEGLHPFMELRVLENTKRSRRNLGLDCDEHSSESRCCRYPLTVDFEAFGWDWIIAPKRYKANYCSGQCEYMFMQKYPHTHLVQQANPRGSAGPCCTPTKMSPINMLYFNDKQQIIYGKIPGMVVDRCGCS.

An N-terminal signal peptide occupies residues 1-20 (MVLAAPLLLGFLLLALELRP). Residues 21-296 (RGEAAEGPAA…VLENTKRSRR (276 aa)) constitute a propeptide that is removed on maturation. Asn92 carries N-linked (GlcNAc...) asparagine glycosylation. 4 cysteine pairs are disulfide-bonded: Cys302–Cys312, Cys311–Cys370, Cys339–Cys402, and Cys343–Cys404.

This sequence belongs to the TGF-beta family. In terms of assembly, homodimer; disulfide-linked. Interacts directly with ACVR2B. Interacts directly with ACVR2A. Interacts with ACVR1B, TGFBR1 and ACVR1C in an ACVR2B-dependent manner. Interacts with FST isoform 2/FS288. In terms of processing, synthesized as large precursor molecule that undergoes proteolytic cleavage by furin-like proteases. This produces an inactive form consisting of the mature C-terminal portion non-covalently bound to its cleaved N-terminal propeptide. Activation of the mature form requires additional cleavage of the propeptide by a tolloid-like metalloproteinase. Highly expressed in the developing limb bud, initially detected in the distal mesenchyme, and later localizing to regions around the developing bones. Is also expressed in adult dental pulp and brain.

It localises to the secreted. Functionally, secreted signal that acts globally to regulate anterior/posterior axial patterning during development. May play critical roles in patterning both mesodermal and neural tissues. It is required for proper vertebral patterning and orofacial development. Signals through activin receptors type-2, ACVR2A and ACVR2B, and activin receptors type-1, ACVR1B, ACVR1C and TGFBR1 leading to the phosphorylation of SMAD2 and SMAD3. This chain is Growth/differentiation factor 11 (Gdf11), found in Mus musculus (Mouse).